The primary structure comprises 306 residues: UDP-3-O-acyl-N-acetylglucosamine deacetylase (306 aa).

Zn(2+) contacts are provided by His79, His238, and Asp242. The Proton donor role is filled by His265.

Belongs to the LpxC family. Zn(2+) serves as cofactor.

It carries out the reaction a UDP-3-O-[(3R)-3-hydroxyacyl]-N-acetyl-alpha-D-glucosamine + H2O = a UDP-3-O-[(3R)-3-hydroxyacyl]-alpha-D-glucosamine + acetate. The protein operates within glycolipid biosynthesis; lipid IV(A) biosynthesis; lipid IV(A) from (3R)-3-hydroxytetradecanoyl-[acyl-carrier-protein] and UDP-N-acetyl-alpha-D-glucosamine: step 2/6. Its function is as follows. Catalyzes the hydrolysis of UDP-3-O-myristoyl-N-acetylglucosamine to form UDP-3-O-myristoylglucosamine and acetate, the committed step in lipid A biosynthesis. In Shewanella baltica (strain OS223), this protein is UDP-3-O-acyl-N-acetylglucosamine deacetylase.